The primary structure comprises 114 residues: Probable non-functional T cell receptor beta variable 5-7 (114 aa).

Residues 1–21 (MGPGLLCWVLLCPLGEGPVDA) form the signal peptide. Positions 22-114 (GVTQSPTHLI…SALYLCASSL (93 aa)) constitute an Ig-like domain. Cysteine 42 and cysteine 110 form a disulfide bridge. Asparagine 90 carries N-linked (GlcNAc...) asparagine glycosylation.

In terms of assembly, alpha-beta TR is a heterodimer composed of an alpha and beta chain; disulfide-linked. The alpha-beta TR is associated with the transmembrane signaling CD3 coreceptor proteins to form the TR-CD3 (TcR or TCR). The assembly of alpha-beta TR heterodimers with CD3 occurs in the endoplasmic reticulum where a single alpha-beta TR heterodimer associates with one CD3D-CD3E heterodimer, one CD3G-CD3E heterodimer and one CD247 homodimer forming a stable octameric structure. CD3D-CD3E and CD3G-CD3E heterodimers preferentially associate with TR alpha and TR beta chains, respectively. The association of the CD247 homodimer is the last step of TcR assembly in the endoplasmic reticulum and is required for transport to the cell surface.

It localises to the cell membrane. Probable non-functional open reading frame (ORF) of V region of the variable domain of T cell receptor (TR) beta chain. Non-functional ORF generally cannot participate in the synthesis of a productive T cell receptor (TR) chain due to altered V-(D)-J or switch recombination and/or splicing site (at mRNA level) and/or conserved amino acid change (protein level). Alpha-beta T cell receptors are antigen specific receptors which are essential to the immune response and are present on the cell surface of T lymphocytes. Recognize peptide-major histocompatibility (MH) (pMH) complexes that are displayed by antigen presenting cells (APC), a prerequisite for efficient T cell adaptive immunity against pathogens. Binding of alpha-beta TR to pMH complex initiates TR-CD3 clustering on the cell surface and intracellular activation of LCK that phosphorylates the ITAM motifs of CD3G, CD3D, CD3E and CD247 enabling the recruitment of ZAP70. In turn ZAP70 phosphorylates LAT, which recruits numerous signaling molecules to form the LAT signalosome. The LAT signalosome propagates signal branching to three major signaling pathways, the calcium, the mitogen-activated protein kinase (MAPK) kinase and the nuclear factor NF-kappa-B (NF-kB) pathways, leading to the mobilization of transcription factors that are critical for gene expression and essential for T cell growth and differentiation. The T cell repertoire is generated in the thymus, by V-(D)-J rearrangement. This repertoire is then shaped by intrathymic selection events to generate a peripheral T cell pool of self-MH restricted, non-autoaggressive T cells. Post-thymic interaction of alpha-beta TR with the pMH complexes shapes TR structural and functional avidity. In Homo sapiens (Human), this protein is Probable non-functional T cell receptor beta variable 5-7.